Here is a 979-residue protein sequence, read N- to C-terminus: Translation initiation factor IF-2 (979 aa).

Positions 68–386 are disordered; sequence VKQKQGTPAS…DKRDAASRAA (319 aa). Composition is skewed to basic and acidic residues over residues 102 to 179, 217 to 229, and 260 to 273; these read QDMR…KPEE, EMEK…EVFR, and TKED…DADG. Residues 317–326 show a composition bias toward polar residues; it reads RPAQQQSNAS. Residues 347–356 show a composition bias toward basic and acidic residues; sequence DVQRQVKETL. The tr-type G domain occupies 478–646; it reads ARPPIVTVMG…KVLLEADILE (169 aa). The G1 stretch occupies residues 487–494; it reads GHVDHGKT. 487–494 serves as a coordination point for GTP; it reads GHVDHGKT. The G2 stretch occupies residues 512-516; the sequence is GITQH. A G3 region spans residues 534–537; the sequence is DTPG. GTP-binding positions include 534–538 and 588–591; these read DTPGH and NKID. Positions 588–591 are G4; sequence NKID. A G5 region spans residues 624–626; the sequence is SAK.

This sequence belongs to the TRAFAC class translation factor GTPase superfamily. Classic translation factor GTPase family. IF-2 subfamily.

It localises to the cytoplasm. One of the essential components for the initiation of protein synthesis. Protects formylmethionyl-tRNA from spontaneous hydrolysis and promotes its binding to the 30S ribosomal subunits. Also involved in the hydrolysis of GTP during the formation of the 70S ribosomal complex. The chain is Translation initiation factor IF-2 from Porphyromonas gingivalis (strain ATCC BAA-308 / W83).